Reading from the N-terminus, the 333-residue chain is tRNA N6-adenosine threonylcarbamoyltransferase (333 aa).

Residues His111 and His115 each contribute to the Fe cation site. Substrate contacts are provided by residues 134 to 138, Asp167, Gly180, and Asn272; that span reads LVSGG. Asp300 provides a ligand contact to Fe cation.

Belongs to the KAE1 / TsaD family. Requires Fe(2+) as cofactor.

It localises to the cytoplasm. It catalyses the reaction L-threonylcarbamoyladenylate + adenosine(37) in tRNA = N(6)-L-threonylcarbamoyladenosine(37) in tRNA + AMP + H(+). In terms of biological role, required for the formation of a threonylcarbamoyl group on adenosine at position 37 (t(6)A37) in tRNAs that read codons beginning with adenine. Is involved in the transfer of the threonylcarbamoyl moiety of threonylcarbamoyl-AMP (TC-AMP) to the N6 group of A37, together with TsaE and TsaB. TsaD likely plays a direct catalytic role in this reaction. The chain is tRNA N6-adenosine threonylcarbamoyltransferase from Legionella pneumophila (strain Lens).